The sequence spans 445 residues: UPF0210 protein llmg_1581 (445 aa).

This sequence belongs to the UPF0210 family. Homodimer.

This is UPF0210 protein llmg_1581 from Lactococcus lactis subsp. cremoris (strain MG1363).